Consider the following 438-residue polypeptide: Xylose isomerase (438 aa).

Catalysis depends on residues His102 and Asp105. Mg(2+)-binding residues include Glu233, Glu269, His272, Asp297, Asp308, Asp310, and Asp340.

Belongs to the xylose isomerase family. As to quaternary structure, homotetramer. Requires Mg(2+) as cofactor.

It is found in the cytoplasm. It catalyses the reaction alpha-D-xylose = alpha-D-xylulofuranose. In Solibacter usitatus (strain Ellin6076), this protein is Xylose isomerase.